The following is an 89-amino-acid chain: MAHKKAGGSSRNGRDSAGRRLGVKKFGSEAVVAGNIIVRQRGTKFYPGSNVGMGKDHTLFALEDGVVRFHTGKQARKYVSVDAMAEAAE.

The tract at residues 1–21 (MAHKKAGGSSRNGRDSAGRRL) is disordered.

The protein belongs to the bacterial ribosomal protein bL27 family.

The polypeptide is Large ribosomal subunit protein bL27 (Erythrobacter litoralis (strain HTCC2594)).